Reading from the N-terminus, the 72-residue chain is Translation initiation factor IF-1 (72 aa).

Residues 1 to 72 form the S1-like domain; sequence MSKEDVIEVE…SRGRIVYRFK (72 aa).

The protein belongs to the IF-1 family. In terms of assembly, component of the 30S ribosomal translation pre-initiation complex which assembles on the 30S ribosome in the order IF-2 and IF-3, IF-1 and N-formylmethionyl-tRNA(fMet); mRNA recruitment can occur at any time during PIC assembly.

It localises to the cytoplasm. In terms of biological role, one of the essential components for the initiation of protein synthesis. Stabilizes the binding of IF-2 and IF-3 on the 30S subunit to which N-formylmethionyl-tRNA(fMet) subsequently binds. Helps modulate mRNA selection, yielding the 30S pre-initiation complex (PIC). Upon addition of the 50S ribosomal subunit IF-1, IF-2 and IF-3 are released leaving the mature 70S translation initiation complex. This is Translation initiation factor IF-1 from Desulfitobacterium hafniense (strain Y51).